The chain runs to 590 residues: Glutamine--fructose-6-phosphate aminotransferase [isomerizing] (590 aa).

Cys-2 acts as the Nucleophile; for GATase activity in catalysis. One can recognise a Glutamine amidotransferase type-2 domain in the interval 2-221 (CGIIGIVSSK…DGELGFITTS (220 aa)). SIS domains lie at 286–422 (IIAE…DNTN) and 445–580 (IGEE…PDKP). Lys-585 (for Fru-6P isomerization activity) is an active-site residue.

Homodimer.

Its subcellular location is the cytoplasm. It carries out the reaction D-fructose 6-phosphate + L-glutamine = D-glucosamine 6-phosphate + L-glutamate. Functionally, catalyzes the first step in hexosamine metabolism, converting fructose-6P into glucosamine-6P using glutamine as a nitrogen source. This chain is Glutamine--fructose-6-phosphate aminotransferase [isomerizing], found in Sulfolobus acidocaldarius (strain ATCC 33909 / DSM 639 / JCM 8929 / NBRC 15157 / NCIMB 11770).